A 340-amino-acid chain; its full sequence is Fructoselysine 6-phosphate deglycase (340 aa).

2 SIS domains span residues 35-169 (IVEE…RLAP) and 201-331 (LGEL…PDER).

As to quaternary structure, homododecamer.

The enzyme catalyses N(6)-(6-phospho-D-fructosyl)-L-lysine + H2O = D-glucose 6-phosphate + L-lysine. The protein operates within carbohydrate metabolism; fructoselysine degradation; D-glucose 6-phosphate and lysine from fructoselysine: step 2/2. Functionally, catalyzes the reversible conversion of fructoselysine 6-phosphate to glucose 6-phosphate and lysine. Functions in a fructoselysine degradation pathway that allows E.coli to grow on fructoselysine or psicoselysine. In Escherichia coli O157:H7, this protein is Fructoselysine 6-phosphate deglycase (frlB).